The sequence spans 273 residues: MTKLIIHLVSDSSVQTAKYAANSAFAQFTSIKPKLYHWPMIRNLELLNEVLSKIESKHGLVLYTIADQELRKALTKFCYELKIPCISVIGKIIKEISVFSGIEIEKEQNYNYKFDKTYFDTLNAIDYAIRHDDGQMLNELSEADIILIGPSRTSKTPTSVFLAYNGLKAANIPYVYNCPFPDFIEKDIDLLVVGLVINPNRLIEIREARLNLLQINENKSYTDFNIVQKECLEVRKICDQRNWPVIDVSTRSIEETAALIMRIYYNRKNKYNK.

149–156 (GPSRTSKT) lines the ADP pocket.

This sequence belongs to the pyruvate, phosphate/water dikinase regulatory protein family. PDRP subfamily.

The enzyme catalyses N(tele)-phospho-L-histidyl/L-threonyl-[pyruvate, phosphate dikinase] + ADP = N(tele)-phospho-L-histidyl/O-phospho-L-threonyl-[pyruvate, phosphate dikinase] + AMP + H(+). It carries out the reaction N(tele)-phospho-L-histidyl/O-phospho-L-threonyl-[pyruvate, phosphate dikinase] + phosphate + H(+) = N(tele)-phospho-L-histidyl/L-threonyl-[pyruvate, phosphate dikinase] + diphosphate. In terms of biological role, bifunctional serine/threonine kinase and phosphorylase involved in the regulation of the pyruvate, phosphate dikinase (PPDK) by catalyzing its phosphorylation/dephosphorylation. The chain is Putative pyruvate, phosphate dikinase regulatory protein from Rickettsia felis (strain ATCC VR-1525 / URRWXCal2) (Rickettsia azadi).